Here is a 266-residue protein sequence, read N- to C-terminus: PTS system mannose-specific EIIC component (266 aa).

Methionine 1 carries the N-formylmethionine modification. Over 1-4 the chain is Periplasmic; sequence MEIT. The region spanning 1–237 is the PTS EIIC type-4 domain; the sequence is MEITTLQIVL…GVIGTVMAVL (237 aa). The stretch at 5–43 is an intramembrane region; the sequence is TLQIVLVFIVACIAGMGSILDEFQFHRPLIACTLVGIVL. Topologically, residues 44–46 are periplasmic; that stretch reads GDM. Residues 47–86 lie within the membrane without spanning it; that stretch reads KTGIIIGGTLEMIALGWMNIGAAVAPDAALASIISTILVI. Topologically, residues 87 to 90 are periplasmic; the sequence is AGHQ. A transmembrane span lies at residues 91–124; sequence SIGAGIALAIPLAAAGQVLTIIVRTITVAFQHAA. Residues 125–132 are Cytoplasmic-facing; that stretch reads DKAADNGN. Residues 133–160 are membrane-embedded; it reads LTAISWIHVSSLFLQAMRVAIPAVIVAL. The Periplasmic segment spans residues 161-176; the sequence is SVGTSEVQNMLNAIPE. Residues 177 to 200 are membrane-embedded; that stretch reads VVTNGLNIAGGMIVVVGYAMVINM. Over 201–207 the chain is Cytoplasmic; the sequence is MRAGYLM. A transmembrane span lies at residues 208–218; that stretch reads PFFYLGFVTAA. At 219–224 the chain is on the periplasmic side; that stretch reads FTNFNL. Over 225 to 242 the chain traverses the membrane; the sequence is VALGVIGTVMAVLYIQLS. Topologically, residues 243–266 are cytoplasmic; it reads PKYNRVAGAPAQAAGNNDLDNELD.

In terms of assembly, homotrimer of protomers that are composed of two subunits, IIC and IID.

Its subcellular location is the cell inner membrane. In terms of biological role, the phosphoenolpyruvate-dependent sugar phosphotransferase system (sugar PTS), a major carbohydrate active transport system, catalyzes the phosphorylation of incoming sugar substrates concomitantly with their translocation across the cell membrane. The enzyme II ManXYZ PTS system is involved in mannose transport. This Escherichia coli O157:H7 protein is PTS system mannose-specific EIIC component (manY).